The chain runs to 192 residues: Rhomboid protease GlpG (192 aa).

The Cytoplasmic portion of the chain corresponds to 1–10 (MKNFLAQQGK). The helical transmembrane segment at 11–31 (ITLILTALCVLIYLAQQLGFE) threads the bilayer. Residues 32–57 (DDIMYLMHYPAYEEQDSEVWRYISHT) lie on the Periplasmic side of the membrane. A helical transmembrane segment spans residues 58–78 (LVHLSNLHILFNLSWFFIFGG). The Cytoplasmic portion of the chain corresponds to 79 to 82 (MIER). Residues 83–103 (TFGSVKLLMLYVVASAITGYV) traverse the membrane as a helical segment. Residues 104 to 107 (QNYV) lie on the Periplasmic side of the membrane. The helical transmembrane segment at 108 to 128 (SGPAFFGLSGVVYAVLGYVFI) threads the bilayer. Catalysis depends on Ser-116, which acts as the Nucleophile. Over 129-141 (RDKLNHHLFDLPE) the chain is Cytoplasmic. Residues 142 to 162 (GFFTMLLVGIALGFISPLFGV) traverse the membrane as a helical segment. Residue Glu-163 is a topological domain, periplasmic. A helical transmembrane segment spans residues 164–184 (MGNAAHISGLIVGLIWGFIDS). The active site involves His-169. Topologically, residues 185 to 192 (KLRKNSLE) are cytoplasmic.

Belongs to the peptidase S54 family.

The protein resides in the cell inner membrane. The enzyme catalyses Cleaves type-1 transmembrane domains using a catalytic dyad composed of serine and histidine that are contributed by different transmembrane domains.. Functionally, rhomboid-type serine protease that catalyzes intramembrane proteolysis. The chain is Rhomboid protease GlpG (glpG) from Haemophilus influenzae (strain ATCC 51907 / DSM 11121 / KW20 / Rd).